A 365-amino-acid polypeptide reads, in one-letter code: UDP-N-acetylglucosamine--N-acetylmuramyl-(pentapeptide) pyrophosphoryl-undecaprenol N-acetylglucosamine transferase (365 aa).

UDP-N-acetyl-alpha-D-glucosamine-binding positions include 12-14 (TGG), Asn-128, Arg-169, Ser-195, and Gln-296.

The protein belongs to the glycosyltransferase 28 family. MurG subfamily.

The protein localises to the cell inner membrane. The catalysed reaction is di-trans,octa-cis-undecaprenyl diphospho-N-acetyl-alpha-D-muramoyl-L-alanyl-D-glutamyl-meso-2,6-diaminopimeloyl-D-alanyl-D-alanine + UDP-N-acetyl-alpha-D-glucosamine = di-trans,octa-cis-undecaprenyl diphospho-[N-acetyl-alpha-D-glucosaminyl-(1-&gt;4)]-N-acetyl-alpha-D-muramoyl-L-alanyl-D-glutamyl-meso-2,6-diaminopimeloyl-D-alanyl-D-alanine + UDP + H(+). The protein operates within cell wall biogenesis; peptidoglycan biosynthesis. In terms of biological role, cell wall formation. Catalyzes the transfer of a GlcNAc subunit on undecaprenyl-pyrophosphoryl-MurNAc-pentapeptide (lipid intermediate I) to form undecaprenyl-pyrophosphoryl-MurNAc-(pentapeptide)GlcNAc (lipid intermediate II). In Gluconobacter oxydans (strain 621H) (Gluconobacter suboxydans), this protein is UDP-N-acetylglucosamine--N-acetylmuramyl-(pentapeptide) pyrophosphoryl-undecaprenol N-acetylglucosamine transferase.